Consider the following 305-residue polypeptide: tRNA dimethylallyltransferase 1 (305 aa).

10-17 (GPTASGKS) provides a ligand contact to ATP. Residue 12 to 17 (TASGKS) participates in substrate binding. The segment at 35-38 (DSLT) is interaction with substrate tRNA.

Belongs to the IPP transferase family. Monomer. Mg(2+) is required as a cofactor.

It carries out the reaction adenosine(37) in tRNA + dimethylallyl diphosphate = N(6)-dimethylallyladenosine(37) in tRNA + diphosphate. Catalyzes the transfer of a dimethylallyl group onto the adenine at position 37 in tRNAs that read codons beginning with uridine, leading to the formation of N6-(dimethylallyl)adenosine (i(6)A). In Trichlorobacter lovleyi (strain ATCC BAA-1151 / DSM 17278 / SZ) (Geobacter lovleyi), this protein is tRNA dimethylallyltransferase 1.